The primary structure comprises 306 residues: Ribonuclease Z (306 aa).

Histidine 63, histidine 65, aspartate 67, histidine 68, histidine 140, aspartate 211, and histidine 269 together coordinate Zn(2+). Residue aspartate 67 is the Proton acceptor of the active site.

The protein belongs to the RNase Z family. In terms of assembly, homodimer. Zn(2+) serves as cofactor.

The catalysed reaction is Endonucleolytic cleavage of RNA, removing extra 3' nucleotides from tRNA precursor, generating 3' termini of tRNAs. A 3'-hydroxy group is left at the tRNA terminus and a 5'-phosphoryl group is left at the trailer molecule.. Functionally, zinc phosphodiesterase, which displays some tRNA 3'-processing endonuclease activity. Probably involved in tRNA maturation, by removing a 3'-trailer from precursor tRNA. The chain is Ribonuclease Z from Listeria monocytogenes serovar 1/2a (strain ATCC BAA-679 / EGD-e).